The primary structure comprises 395 residues: S-adenosylmethionine synthase (395 aa).

His16 contacts ATP. Asp18 contributes to the Mg(2+) binding site. Residue Glu44 participates in K(+) binding. L-methionine contacts are provided by Glu57 and Gln100. Residues 100 to 110 (QSPDIAGGVNL) are flexible loop. ATP contacts are provided by residues 175–177 (DGK), 242–243 (RF), Asp251, 257–258 (RK), Ala274, and Lys278. Asp251 contacts L-methionine. L-methionine is bound at residue Lys282.

This sequence belongs to the AdoMet synthase family. In terms of assembly, homotetramer; dimer of dimers. Mg(2+) serves as cofactor. Requires K(+) as cofactor.

The protein resides in the cytoplasm. The enzyme catalyses L-methionine + ATP + H2O = S-adenosyl-L-methionine + phosphate + diphosphate. It participates in amino-acid biosynthesis; S-adenosyl-L-methionine biosynthesis; S-adenosyl-L-methionine from L-methionine: step 1/1. Functionally, catalyzes the formation of S-adenosylmethionine (AdoMet) from methionine and ATP. The overall synthetic reaction is composed of two sequential steps, AdoMet formation and the subsequent tripolyphosphate hydrolysis which occurs prior to release of AdoMet from the enzyme. The polypeptide is S-adenosylmethionine synthase (Thermus thermophilus (strain ATCC BAA-163 / DSM 7039 / HB27)).